The following is a 427-amino-acid chain: L-glutamine:2-deoxy-scyllo-inosose aminotransferase (427 aa).

Positions 1–20 (MPLQSSRLAVDNGTPVRGKP) are disordered. At lysine 205 the chain carries N6-(pyridoxal phosphate)lysine.

It belongs to the DegT/DnrJ/EryC1 family. L-glutamine:2-deoxy-scyllo-inosose/scyllo-inosose aminotransferase subfamily. The cofactor is pyridoxal 5'-phosphate.

It carries out the reaction 2-deoxy-L-scyllo-inosose + L-glutamine = 2-deoxy-scyllo-inosamine + 2-oxoglutaramate. The enzyme catalyses 3-amino-2,3-dideoxy-scyllo-inosose + L-glutamine = 2-deoxystreptamine + 2-oxoglutaramate. Its pathway is metabolic intermediate biosynthesis; 2-deoxystreptamine biosynthesis; 2-deoxystreptamine from D-glucose 6-phosphate: step 2/4. It participates in antibiotic biosynthesis; kanamycin biosynthesis. Catalyzes the PLP-dependent transamination of 2-deoxy-scyllo-inosose (2-DOI) to form 2-deoxy-scyllo-inosamine (2-DOIA) using L-glutamine as the amino donor. Also catalyzes the transamination of 3-amino-2,3-dideoxy-scyllo-inosose (keto-2-DOIA) into 2-deoxystreptamine (2-DOS). This chain is L-glutamine:2-deoxy-scyllo-inosose aminotransferase (kanB), found in Streptomyces kanamyceticus.